The chain runs to 300 residues: Protoheme IX farnesyltransferase (300 aa).

The next 9 helical transmembrane spans lie at 24–44, 48–68, 94–114, 118–138, 146–166, 172–192, 217–237, 239–259, and 278–298; these read VTQL…PGMV, VLLG…AINC, LQIL…LYTF, LTMW…TLLL, IVIG…AVTG, AWIL…VLAL, LHIL…FISG, SGAV…AYAW, and IVYL…RPVI.

It belongs to the UbiA prenyltransferase family. Protoheme IX farnesyltransferase subfamily.

The protein localises to the cell inner membrane. The enzyme catalyses heme b + (2E,6E)-farnesyl diphosphate + H2O = Fe(II)-heme o + diphosphate. The protein operates within porphyrin-containing compound metabolism; heme O biosynthesis; heme O from protoheme: step 1/1. Its function is as follows. Converts heme B (protoheme IX) to heme O by substitution of the vinyl group on carbon 2 of heme B porphyrin ring with a hydroxyethyl farnesyl side group. The sequence is that of Protoheme IX farnesyltransferase from Burkholderia pseudomallei (strain 1106a).